Reading from the N-terminus, the 42-residue chain is Large ribosomal subunit protein bL36 (42 aa).

It belongs to the bacterial ribosomal protein bL36 family.

The protein is Large ribosomal subunit protein bL36 of Wolbachia pipientis wMel.